A 343-amino-acid polypeptide reads, in one-letter code: L-threonine 3-dehydrogenase (343 aa).

Residue Cys38 coordinates Zn(2+). Active-site charge relay system residues include Thr40 and His43. Zn(2+) contacts are provided by His63, Glu64, Cys93, Cys96, Cys99, and Cys107. Residues Ile175, Asp195, Arg200, 262 to 264 (LGI), and 286 to 287 (IY) contribute to the NAD(+) site.

It belongs to the zinc-containing alcohol dehydrogenase family. As to quaternary structure, homotetramer. Zn(2+) is required as a cofactor.

Its subcellular location is the cytoplasm. The enzyme catalyses L-threonine + NAD(+) = (2S)-2-amino-3-oxobutanoate + NADH + H(+). It participates in amino-acid degradation; L-threonine degradation via oxydo-reductase pathway; glycine from L-threonine: step 1/2. Catalyzes the NAD(+)-dependent oxidation of L-threonine to 2-amino-3-ketobutyrate. This chain is L-threonine 3-dehydrogenase, found in Paraburkholderia phytofirmans (strain DSM 17436 / LMG 22146 / PsJN) (Burkholderia phytofirmans).